The primary structure comprises 835 residues: Leucine--tRNA ligase (835 aa).

The 'HIGH' region signature appears at 36–46; the sequence is PYPSGKIHVGH. The short motif at 602 to 606 is the 'KMSKS' region element; that stretch reads KMSKS. Lys-605 lines the ATP pocket.

It belongs to the class-I aminoacyl-tRNA synthetase family.

It is found in the cytoplasm. It carries out the reaction tRNA(Leu) + L-leucine + ATP = L-leucyl-tRNA(Leu) + AMP + diphosphate. The chain is Leucine--tRNA ligase from Rickettsia rickettsii (strain Iowa).